The chain runs to 741 residues: NAD(P)H-quinone oxidoreductase subunit 5, chloroplastic (741 aa).

14 helical membrane-spanning segments follow: residues 9–29 (WIIP…LLLV), 40–60 (WAFP…DLSI), 89–109 (IDPL…MVLI), 122–139 (LRFF…LGLV), 147–167 (IHIF…FWFT), 185–205 (GDFG…SLEF), 219–239 (NGVN…GAVA), 258–278 (TPIS…FLVA), 280–300 (LLPI…LGII), 396–416 (TTFL…CFWS), 425–445 (WLYS…TAFY), 544–564 (LFPL…GIPF), 603–623 (IYSV…YGSV), and 719–739 (YLFV…FYFL).

The protein belongs to the complex I subunit 5 family. As to quaternary structure, NDH is composed of at least 16 different subunits, 5 of which are encoded in the nucleus.

It is found in the plastid. It localises to the chloroplast thylakoid membrane. The catalysed reaction is a plastoquinone + NADH + (n+1) H(+)(in) = a plastoquinol + NAD(+) + n H(+)(out). It carries out the reaction a plastoquinone + NADPH + (n+1) H(+)(in) = a plastoquinol + NADP(+) + n H(+)(out). In terms of biological role, NDH shuttles electrons from NAD(P)H:plastoquinone, via FMN and iron-sulfur (Fe-S) centers, to quinones in the photosynthetic chain and possibly in a chloroplast respiratory chain. The immediate electron acceptor for the enzyme in this species is believed to be plastoquinone. Couples the redox reaction to proton translocation, and thus conserves the redox energy in a proton gradient. The polypeptide is NAD(P)H-quinone oxidoreductase subunit 5, chloroplastic (ndhF) (Liriodendron tulipifera (Tuliptree)).